A 242-amino-acid chain; its full sequence is MKRAKKAKKEKKESTPLPFPYLASIVLLPWWISLSFKKCFEPWVTHWCNTRQSKFFLNDIQEKGTLERFIELEELFLLDKIIKEYYPDTHIQRLWIRIHKETIQLVKIHNEDHNHIIFCLSTNIISFTILSGYSILGNEELFILNSWVQEFLYNLSDTIKAFSILLFTDLCIGFHSPHGWELMIGSIYKIFGFAHNDQVISGFVSTFPVFLDTFFKYLIFRHLNRVSPSLVVIYDSINEELI.

2 helical membrane passes run 116–136 (IIFC…YSIL) and 200–220 (ISGF…YLIF).

Belongs to the CemA family.

The protein localises to the plastid. Its subcellular location is the chloroplast inner membrane. It catalyses the reaction K(+)(in) + H(+)(out) = K(+)(out) + H(+)(in). Functionally, contributes to K(+)/H(+) antiport activity by supporting proton efflux to control proton extrusion and homeostasis in chloroplasts in a light-dependent manner to modulate photosynthesis. Prevents excessive induction of non-photochemical quenching (NPQ) under continuous-light conditions. Indirectly promotes efficient inorganic carbon uptake into chloroplasts. The chain is Potassium/proton antiporter CemA from Chloranthus spicatus (Chulantree).